A 490-amino-acid chain; its full sequence is Secretory immunoglobulin A-binding protein EsiB (490 aa).

The first 23 residues, 1–23 (MKKSLLAVMLTGLFALVSLPALG), serve as a signal peptide directing secretion. 11 Sel1-like repeats span residues 39–74 (AKAQLELGYRYFQGNETTKDLTQAMDWFRRAAEQGY), 77–109 (AEYVLGLRYMNGEGVPQDYAQAVIWYKKAALKG), 111–145 (PQAQQNLGVMYHEGNGVKVDKAESVKWFRLAAEQG), 153–182 (MGDAYFEGDGVTRDYVMAREWYSKAAEQGN), 185–218 (SCNQLGYMYSRGLGVERNDAISAQWYRKSATSGD), 222–254 (QLHLADMYYFGIGVTQDYTQSRVLFSQSAEQGN), 256–290 (IAQFRLGYILEQGLAGAKEPLKALEWYRKSAEQGN), 291–327 (SDGQYYLAHLYDKGAEGVAKNREQAISWYTKSAEQGD), 328–361 (ATAQANLGAIYFRLGSEEEHKKAVEWFRKAAAKG), 364–397 (AAQFNLGNALLQGKGVKKDEQQAAIWMRKAAEQG), and 399–430 (SAAQVQLGEIYYYGLGVERDYVQAWAWFDTAS). Mg(2+)-binding residues include histidine 122, glutamate 159, and aspartate 161.

As to quaternary structure, interacts with human secreted IgA (SIgA) at least via resides 244-260. Requires Mg(2+) as cofactor.

Its subcellular location is the cell surface. Its function is as follows. Upon host (human neutrophil) infection interferes with productive FCAR signaling, inhibiting secreted IgA (SIgA) effector functions and probably avoiding neutrophil activation. Inhibits the SIgA-mediated oxidative burst by neutrophils, decreases generation of ROS (reactive oxygen species) by neutrophils and reduces chemotaxis by neutrophils, all of which are SIgA effector functions used to stimulate the immune response. Does not block SIgA-binding to its receptor (FCAR) on neutrophils, but it decreases SIgA-stimulated phosphorylation of cytoplasmic proteins, including phospholipase C-gamma and MAP kinases, all actions that may be advantageous to the pathogen. This Escherichia coli O6:H1 (strain CFT073 / ATCC 700928 / UPEC) protein is Secretory immunoglobulin A-binding protein EsiB.